The primary structure comprises 345 residues: Phenylalanine--tRNA ligase alpha subunit (345 aa).

Residue glutamate 253 participates in Mg(2+) binding.

Belongs to the class-II aminoacyl-tRNA synthetase family. Phe-tRNA synthetase alpha subunit type 1 subfamily. In terms of assembly, tetramer of two alpha and two beta subunits. Mg(2+) is required as a cofactor.

Its subcellular location is the cytoplasm. The catalysed reaction is tRNA(Phe) + L-phenylalanine + ATP = L-phenylalanyl-tRNA(Phe) + AMP + diphosphate + H(+). The sequence is that of Phenylalanine--tRNA ligase alpha subunit from Lawsonia intracellularis (strain PHE/MN1-00).